Reading from the N-terminus, the 232-residue chain is Homeobox protein Rhox13 (232 aa).

The segment at 45 to 114 is disordered; the sequence is QAAVASSHDS…EAAAPSVAAV (70 aa). The span at 68–105 shows a compositional bias: acidic residues; the sequence is SDSESESDSESESDSSDSSDESDDDSSTSDEDTSDPEE. Residues 148–207 constitute a DNA-binding region (homeobox); sequence RRGPPFHFAQWQVEEMESLFEETQYPDLLTRGELARTLNVPEVKVKVWFTNRRAKQRKIE.

This sequence belongs to the paired-like homeobox family.

It localises to the nucleus. Its function is as follows. Probable transcription factor. In Mus musculus (Mouse), this protein is Homeobox protein Rhox13.